The following is a 704-amino-acid chain: Polyribonucleotide nucleotidyltransferase (704 aa).

Asp-487 and Asp-493 together coordinate Mg(2+). The KH domain occupies 554 to 613 (PRLLTIKIHPDKIREVIGKGGSTIQAITKETGTQIDIQDDGTIIIASVNAIAAQAAKSRI). An S1 motif domain is found at 623–691 (GRIYEGKVAK…KQGRIRLSIK (69 aa)).

The protein belongs to the polyribonucleotide nucleotidyltransferase family. As to quaternary structure, component of the RNA degradosome, which is a multiprotein complex involved in RNA processing and mRNA degradation. The cofactor is Mg(2+).

The protein resides in the cytoplasm. The enzyme catalyses RNA(n+1) + phosphate = RNA(n) + a ribonucleoside 5'-diphosphate. Involved in mRNA degradation. Catalyzes the phosphorolysis of single-stranded polyribonucleotides processively in the 3'- to 5'-direction. In Xanthomonas campestris pv. campestris (strain 8004), this protein is Polyribonucleotide nucleotidyltransferase.